We begin with the raw amino-acid sequence, 864 residues long: 3-O-alpha-D-mannopyranosyl-alpha-D-mannopyranose xylosylphosphotransferase (864 aa).

The interval 1 to 66 (MPSTALSPPS…VPPRSPSRKI (66 aa)) is disordered. Residues 1–82 (MPSTALSPPS…HIRPHITPRT (82 aa)) are Cytoplasmic-facing. Low complexity-rich tracts occupy residues 16–29 (SYDSYSSSLSPSSP) and 42–52 (SPSPSRLESLL). The chain crosses the membrane as a helical span at residues 83-103 (LTPVFLWTLALWLIHHFLFPL). Residues 104–864 (SSPFAKLAKP…WDPVKDRYND (761 aa)) are Lumenal-facing. N-linked (GlcNAc...) asparagine glycans are attached at residues N200, N301, and N583.

Belongs to the XPT1 family. It depends on Mn(2+) as a cofactor.

It localises to the golgi apparatus membrane. It catalyses the reaction 3-alpha-D-mannopyranosyl-alpha-D-mannopyranose + UDP-alpha-D-xylose = 3-O-(6-O-alpha-D-xylosylphospho-alpha-D-mannopyranosyl)-alpha-D-mannopyranose + UMP + H(+). Functionally, xylosylphosphotransferase that is specific for UDP-xylose as a donor and mannose as an acceptor to form a xylose-alpha-1-phosphate-6-mannose linkage. Functions in the O-glycosylation of proteins en route through the secretory pathway. This chain is 3-O-alpha-D-mannopyranosyl-alpha-D-mannopyranose xylosylphosphotransferase (XPT1), found in Cryptococcus neoformans var. grubii (Filobasidiella neoformans var. grubii).